The chain runs to 87 residues: Small ribosomal subunit protein bS20 (87 aa).

Belongs to the bacterial ribosomal protein bS20 family.

In terms of biological role, binds directly to 16S ribosomal RNA. This chain is Small ribosomal subunit protein bS20, found in Neorickettsia sennetsu (strain ATCC VR-367 / Miyayama) (Ehrlichia sennetsu).